A 626-amino-acid chain; its full sequence is Glutamine--fructose-6-phosphate aminotransferase [isomerizing] (626 aa).

The active-site Nucleophile; for GATase activity is cysteine 2. The region spanning 2-222 (CGIVGYIGPQ…NGELARLTPT (221 aa)) is the Glutamine amidotransferase type-2 domain. SIS domains are found at residues 293 to 441 (LPPS…QRQS) and 471 to 616 (YIEA…VDQP). Lysine 621 functions as the For Fru-6P isomerization activity in the catalytic mechanism.

Homodimer.

Its subcellular location is the cytoplasm. It catalyses the reaction D-fructose 6-phosphate + L-glutamine = D-glucosamine 6-phosphate + L-glutamate. Functionally, catalyzes the first step in hexosamine metabolism, converting fructose-6P into glucosamine-6P using glutamine as a nitrogen source. This Thermosynechococcus vestitus (strain NIES-2133 / IAM M-273 / BP-1) protein is Glutamine--fructose-6-phosphate aminotransferase [isomerizing].